Consider the following 102-residue polypeptide: PqqA binding protein (102 aa).

This sequence belongs to the PqqD family. As to quaternary structure, monomer. Interacts with PqqE.

The protein operates within cofactor biosynthesis; pyrroloquinoline quinone biosynthesis. Functionally, functions as a PqqA binding protein and presents PqqA to PqqE, in the pyrroloquinoline quinone (PQQ) biosynthetic pathway. This chain is PqqA binding protein, found in Rhodopseudomonas palustris (strain HaA2).